The chain runs to 167 residues: RNA pyrophosphohydrolase (167 aa).

The Nudix hydrolase domain maps to proline 8–arginine 158. The Nudix box motif lies at glycine 49–glycine 70.

This sequence belongs to the Nudix hydrolase family. RppH subfamily. A divalent metal cation serves as cofactor.

Accelerates the degradation of transcripts by removing pyrophosphate from the 5'-end of triphosphorylated RNA, leading to a more labile monophosphorylated state that can stimulate subsequent ribonuclease cleavage. In Gluconacetobacter diazotrophicus (strain ATCC 49037 / DSM 5601 / CCUG 37298 / CIP 103539 / LMG 7603 / PAl5), this protein is RNA pyrophosphohydrolase.